The primary structure comprises 322 residues: Cytochrome c biogenesis protein CcsA (322 aa).

8 helical membrane-spanning segments follow: residues 9–29, 44–64, 71–91, 98–118, 143–163, 226–246, 253–273, and 287–307; these read ILTH…LITL, GMIA…IYSG, LYES…VPYF, LTTI…SGLL, MILS…LLVI, VISL…VWAN, WSWD…AIYL, and AIVA…VNLL.

The protein belongs to the CcmF/CycK/Ccl1/NrfE/CcsA family. As to quaternary structure, may interact with Ccs1.

Its subcellular location is the plastid. The protein resides in the chloroplast thylakoid membrane. Its function is as follows. Required during biogenesis of c-type cytochromes (cytochrome c6 and cytochrome f) at the step of heme attachment. The sequence is that of Cytochrome c biogenesis protein CcsA from Guizotia abyssinica (Niger).